Consider the following 427-residue polypeptide: Enolase (427 aa).

Position 163 (Gln163) interacts with (2R)-2-phosphoglycerate. Glu205 functions as the Proton donor in the catalytic mechanism. Mg(2+) contacts are provided by Asp242, Glu285, and Asp312. (2R)-2-phosphoglycerate is bound by residues Lys337, Arg366, Ser367, and Lys388. The Proton acceptor role is filled by Lys337.

The protein belongs to the enolase family. It depends on Mg(2+) as a cofactor.

The protein resides in the cytoplasm. Its subcellular location is the secreted. The protein localises to the cell surface. The catalysed reaction is (2R)-2-phosphoglycerate = phosphoenolpyruvate + H2O. Its pathway is carbohydrate degradation; glycolysis; pyruvate from D-glyceraldehyde 3-phosphate: step 4/5. In terms of biological role, catalyzes the reversible conversion of 2-phosphoglycerate (2-PG) into phosphoenolpyruvate (PEP). It is essential for the degradation of carbohydrates via glycolysis. The sequence is that of Enolase from Rhodopseudomonas palustris (strain ATCC BAA-98 / CGA009).